The following is a 289-amino-acid chain: BTB/POZ domain-containing protein KCTD7 (289 aa).

Residues 1–42 (MVVVTGREPDSRHSDGAMSSSEAEDDFLEPATPTATQAGHGL) are disordered. Residues 53-141 (VPLNIGGAHF…YAIGPLLEQL (89 aa)) form the BTB domain.

In terms of assembly, interacts with CUL3. As to expression, high expression in brain, particularly in post-mitotic neurons. Expressed in the mitral cells of the olfactory bulbs, the hippocampus, the deep layers of the cerebral cortex and Purkinje cells of the cerebellum. Not detected in astrocytes or microglial cells. Also expressed in heart, liver, spleen and kidney.

The protein localises to the cell membrane. It is found in the cytoplasm. Its subcellular location is the cytosol. Its function is as follows. May be involved in the control of excitability of cortical neurons. This chain is BTB/POZ domain-containing protein KCTD7 (Kctd7), found in Mus musculus (Mouse).